Consider the following 287-residue polypeptide: MELLPPALRDMEETEGSLCAFPTPDHFYDDPCFNSSDMSFFEELEPRLVHVTLLKRGPRHEEEEEEHVRAPSGHHQAGRCLLWACKACKRKSSGADRRRAATMRERRRLSKVNDAFETLKRCTSTNPNQRLPKVDILRNAISYIDSLQTLLRDQEQSLYPNMEHYSGDSDASSPSSNCSDGMNSPPCSSRRRNSYDSNFYTDSPNDVRLGKSSMISSLDCLSSIVERISTQSPSCPAPISVDSGSEGSPCSPLQGETLSDRGIPISSPGNSCTQLSHDPSSTIYQIL.

Positions 96 to 147 (DRRRAATMRERRRLSKVNDAFETLKRCTSTNPNQRLPKVDILRNAISYIDSL) constitute a bHLH domain. 2 disordered regions span residues 161–202 (NMEH…FYTD) and 231–277 (QSPS…QLSH). Residues 168–188 (DSDASSPSSNCSDGMNSPPCS) show a composition bias toward low complexity. Over residues 267 to 277 (SPGNSCTQLSH) the composition is skewed to polar residues.

Efficient DNA binding requires dimerization with another bHLH protein.

It is found in the nucleus. In terms of biological role, may act as a transcriptional activator that promotes transcription of muscle-specific target genes and plays a role in muscle differentiation. This Xenopus laevis (African clawed frog) protein is Myoblast determination protein 1 homolog B (myod1-b).